The following is a 309-amino-acid chain: tRNA pseudouridine synthase B (309 aa).

Asp-51 acts as the Nucleophile in catalysis.

Belongs to the pseudouridine synthase TruB family. Type 1 subfamily.

It carries out the reaction uridine(55) in tRNA = pseudouridine(55) in tRNA. Functionally, responsible for synthesis of pseudouridine from uracil-55 in the psi GC loop of transfer RNAs. This is tRNA pseudouridine synthase B from Coxiella burnetii (strain Dugway 5J108-111).